Here is a 277-residue protein sequence, read N- to C-terminus: Large ribosomal subunit protein uL2c (277 aa).

Positions 225–277 are disordered; the sequence is MNPCDHPHGGGEGRSPIGRPKPVTPWGKPALGKKTRSPKRFSNKYIIRSRKMV. Residues 255–277 show a composition bias toward basic residues; it reads LGKKTRSPKRFSNKYIIRSRKMV.

It belongs to the universal ribosomal protein uL2 family. In terms of assembly, part of the 50S ribosomal subunit.

It localises to the plastid. The protein resides in the chloroplast. This Euglena gracilis protein is Large ribosomal subunit protein uL2c (rpl2).